Reading from the N-terminus, the 394-residue chain is Actin-related protein 2 (394 aa).

Methionine 1 carries the N-acetylmethionine modification. ATP is bound by residues 160–162 and 214–218; these read GDG and RMIKE. The residue at position 299 (lysine 299) is an N6-acetyllysine. 305-310 provides a ligand contact to ATP; it reads GGSTMY. Lysine 322 carries the N6-acetyllysine modification.

It belongs to the actin family. ARP2 subfamily. Component of the Arp2/3 complex composed of ACTR2/ARP2, ACTR3/ARP3, ARPC1B/p41-ARC, ARPC2/p34-ARC, ARPC3/p21-ARC, ARPC4/p20-ARC and ARPC5/p16-ARC. Interacts with AVIL.

It is found in the cytoplasm. Its subcellular location is the cytoskeleton. The protein localises to the cell projection. The protein resides in the nucleus. In terms of biological role, ATP-binding component of the Arp2/3 complex, a multiprotein complex that mediates actin polymerization upon stimulation by nucleation-promoting factor (NPF). The Arp2/3 complex mediates the formation of branched actin networks in the cytoplasm, providing the force for cell motility. Seems to contact the pointed end of the daughter actin filament. In podocytes, required for the formation of lamellipodia downstream of AVIL and PLCE1 regulation. In addition to its role in the cytoplasmic cytoskeleton, the Arp2/3 complex also promotes actin polymerization in the nucleus, thereby regulating gene transcription and repair of damaged DNA. The Arp2/3 complex promotes homologous recombination (HR) repair in response to DNA damage by promoting nuclear actin polymerization, leading to drive motility of double-strand breaks (DSBs). The protein is Actin-related protein 2 (ACTR2) of Bos taurus (Bovine).